Reading from the N-terminus, the 188-residue chain is dTTP/UTP pyrophosphatase (188 aa).

Residue D70 is the Proton acceptor of the active site.

It belongs to the Maf family. YhdE subfamily. A divalent metal cation serves as cofactor.

It localises to the cytoplasm. It carries out the reaction dTTP + H2O = dTMP + diphosphate + H(+). The enzyme catalyses UTP + H2O = UMP + diphosphate + H(+). In terms of biological role, nucleoside triphosphate pyrophosphatase that hydrolyzes dTTP and UTP. May have a dual role in cell division arrest and in preventing the incorporation of modified nucleotides into cellular nucleic acids. The polypeptide is dTTP/UTP pyrophosphatase (Clostridium beijerinckii (strain ATCC 51743 / NCIMB 8052) (Clostridium acetobutylicum)).